A 150-amino-acid polypeptide reads, in one-letter code: Large ribosomal subunit protein bL9 (150 aa).

It belongs to the bacterial ribosomal protein bL9 family.

Binds to the 23S rRNA. This chain is Large ribosomal subunit protein bL9, found in Pediococcus pentosaceus (strain ATCC 25745 / CCUG 21536 / LMG 10740 / 183-1w).